The chain runs to 55 residues: uncharacterized protein (55 aa).

This is an uncharacterized protein from Salmonella typhimurium (strain LT2 / SGSC1412 / ATCC 700720).